Here is a 206-residue protein sequence, read N- to C-terminus: MSDSRQQLIALGAVFESAALVDKLARTGQISEAPLGCMLGSLLARNPASTLDVYGGDTLNLRDGFKALASALERKPGSLQREPLRYALAMLTLERQLDKRGDMLDLIGQRLDQVEQQVQHFGLVHENVIASFASIYQDTLSTFRQRIQVHGDMRHLQVSSNAARIRALLLAGIRSARLWRQLGGSRWQMVFSRRRLLNELYLLLRG.

It belongs to the HflD family.

It is found in the cytoplasm. It localises to the cell inner membrane. This Pseudomonas paraeruginosa (strain DSM 24068 / PA7) (Pseudomonas aeruginosa (strain PA7)) protein is High frequency lysogenization protein HflD homolog.